The sequence spans 351 residues: Methylthioribose-1-phosphate isomerase (351 aa).

Asp-244 acts as the Proton donor in catalysis.

Belongs to the eIF-2B alpha/beta/delta subunits family. MtnA subfamily.

It is found in the cytoplasm. It localises to the nucleus. The enzyme catalyses 5-(methylsulfanyl)-alpha-D-ribose 1-phosphate = 5-(methylsulfanyl)-D-ribulose 1-phosphate. It participates in amino-acid biosynthesis; L-methionine biosynthesis via salvage pathway; L-methionine from S-methyl-5-thio-alpha-D-ribose 1-phosphate: step 1/6. In terms of biological role, catalyzes the interconversion of methylthioribose-1-phosphate (MTR-1-P) into methylthioribulose-1-phosphate (MTRu-1-P). The sequence is that of Methylthioribose-1-phosphate isomerase from Anopheles gambiae (African malaria mosquito).